The chain runs to 265 residues: Undecaprenyl-diphosphatase (265 aa).

Transmembrane regions (helical) follow at residues 38–58, 75–95, 108–128, 135–155, 181–201, 215–235, and 244–264; these read RSDFFNIVIQAGAILAICLAL, RDYVLKVGVAFLVTAVVGLIV, PVAWALLIGGVWMLVAEHFAG, VVTWKVAIAVGLAQVVAGVFP, FVFMVGIPTMFAASGYALLEM, VAVAFVAATITGFVVVKWLLG, and VFAVYRMLLGAALLLWLPAAA.

This sequence belongs to the UppP family.

The protein localises to the cell inner membrane. It carries out the reaction di-trans,octa-cis-undecaprenyl diphosphate + H2O = di-trans,octa-cis-undecaprenyl phosphate + phosphate + H(+). Catalyzes the dephosphorylation of undecaprenyl diphosphate (UPP). Confers resistance to bacitracin. In Xanthomonas euvesicatoria pv. vesicatoria (strain 85-10) (Xanthomonas campestris pv. vesicatoria), this protein is Undecaprenyl-diphosphatase.